A 325-amino-acid chain; its full sequence is Probable ABC transporter permease YtrD (325 aa).

8 helical membrane passes run 16 to 36, 63 to 83, 113 to 133, 146 to 166, 179 to 199, 233 to 253, 272 to 292, and 298 to 318; these read VALVITILVFILGNPLSILNM, SSFISLFWIWGVVLAVSQLGI, MVIVVPQLIGYVLSVLLIMLL, LGMIIVSMLAYSLVMAGGALT, VAISPFLLISLPVINLEILFG, YLVIPAIMTIIFYIIGYISFV, PVQIIVIIIGIMGFGYFGFTA, and GYLIGMGTGAVIGFLISYFAI.

This sequence belongs to the ABC-5 integral membrane protein family. As to quaternary structure, the complex is composed of 2 ATP-binding proteins (YtrB and YtrE), 2 transmembrane proteins (YtrC and YtrD) and a solute-binding protein (YtrF).

It is found in the cell membrane. Its function is as follows. Part of the ABC transporter complex YtrBCDEF that plays a role in acetoin utilization during stationary phase and sporulation. The sequence is that of Probable ABC transporter permease YtrD (ytrD) from Bacillus subtilis (strain 168).